The primary structure comprises 303 residues: D-alanine--D-alanine ligase (303 aa).

The ATP-grasp domain occupies 100–295 (KQLLRRHGIL…FPALIARLIE (196 aa)). 127–180 (GLGYPLFVKPNTGGSSLCLSRVTQPEGLAPALEAVFAHCGEAIVEPAIPGVEVT) lines the ATP pocket. Asp-249, Glu-262, and Asn-264 together coordinate Mg(2+).

It belongs to the D-alanine--D-alanine ligase family. It depends on Mg(2+) as a cofactor. Mn(2+) is required as a cofactor.

The protein localises to the cytoplasm. The catalysed reaction is 2 D-alanine + ATP = D-alanyl-D-alanine + ADP + phosphate + H(+). It functions in the pathway cell wall biogenesis; peptidoglycan biosynthesis. Its function is as follows. Cell wall formation. This chain is D-alanine--D-alanine ligase, found in Nitratidesulfovibrio vulgaris (strain DP4) (Desulfovibrio vulgaris).